Here is a 116-residue protein sequence, read N- to C-terminus: Putative BPES syndrome breakpoint region protein (116 aa).

Seems to be expressed only in testis.

The chain is Putative BPES syndrome breakpoint region protein (BPESC1) from Homo sapiens (Human).